The chain runs to 340 residues: GTPase Obg (340 aa).

One can recognise an Obg domain in the interval 1–158 (MSFIDEAKVY…KWIILKLKII (158 aa)). The OBG-type G domain occupies 159-325 (SDVGIIGLPN…LSILIKHINK (167 aa)). GTP is bound by residues 165-172 (GLPNAGKS), 190-194 (FTTLE), 211-214 (DIPG), 278-281 (NKCD), and 306-308 (SSI). The Mg(2+) site is built by S172 and T192.

It belongs to the TRAFAC class OBG-HflX-like GTPase superfamily. OBG GTPase family. Monomer. The cofactor is Mg(2+).

It localises to the cytoplasm. An essential GTPase which binds GTP, GDP and possibly (p)ppGpp with moderate affinity, with high nucleotide exchange rates and a fairly low GTP hydrolysis rate. Plays a role in control of the cell cycle, stress response, ribosome biogenesis and in those bacteria that undergo differentiation, in morphogenesis control. The protein is GTPase Obg of Ehrlichia ruminantium (strain Gardel).